The following is a 219-amino-acid chain: Protein-methionine-sulfoxide reductase heme-binding subunit MsrQ (219 aa).

Transmembrane regions (helical) follow at residues 17 to 37, 88 to 108, 121 to 141, 153 to 173, and 184 to 204; these read AKPL…YAAW, LFAY…DMGF, PFIL…ATSF, WQLL…HFFW, and VFVY…NHWA.

This sequence belongs to the MsrQ family. Heterodimer of a catalytic subunit (MsrP) and a heme-binding subunit (MsrQ). FMN serves as cofactor. Heme b is required as a cofactor.

The protein localises to the cell inner membrane. In terms of biological role, part of the MsrPQ system that repairs oxidized periplasmic proteins containing methionine sulfoxide residues (Met-O), using respiratory chain electrons. Thus protects these proteins from oxidative-stress damage caused by reactive species of oxygen and chlorine generated by the host defense mechanisms. MsrPQ is essential for the maintenance of envelope integrity under bleach stress, rescuing a wide series of structurally unrelated periplasmic proteins from methionine oxidation. MsrQ provides electrons for reduction to the reductase catalytic subunit MsrP, using the quinone pool of the respiratory chain. In Polaromonas naphthalenivorans (strain CJ2), this protein is Protein-methionine-sulfoxide reductase heme-binding subunit MsrQ.